The following is a 215-amino-acid chain: Large ribosomal subunit protein bL25 (215 aa).

The span at 192–203 (EEATEEEEEAAE) shows a compositional bias: acidic residues. The disordered stretch occupies residues 192-215 (EEATEEEEEAAEPEVIKRKEEEEE). Basic and acidic residues predominate over residues 205–215 (EVIKRKEEEEE).

The protein belongs to the bacterial ribosomal protein bL25 family. CTC subfamily. Part of the 50S ribosomal subunit; part of the 5S rRNA/L5/L18/L25 subcomplex. Contacts the 5S rRNA. Binds to the 5S rRNA independently of L5 and L18.

Functionally, this is one of the proteins that binds to the 5S RNA in the ribosome where it forms part of the central protuberance. The protein is Large ribosomal subunit protein bL25 of Thermotoga maritima (strain ATCC 43589 / DSM 3109 / JCM 10099 / NBRC 100826 / MSB8).